The primary structure comprises 1683 residues: A-kinase anchor protein SPHKAP (1683 aa).

Composition is skewed to polar residues over residues 1–14 and 289–301; these read MDVNSRLSVQSNVE and AENTALQSLNPSA. Disordered regions lie at residues 1-30, 275-320, and 582-601; these read MDVNSRLSVQSNVESPLMPEDSEPQQITSS, RMPS…ATNY, and LLPTPGASEERSSIGSLVTE. Residues 910 to 927 are PKA-RII subunit binding domain; that stretch reads FAEELAETVVSMATEIAA. Residues 960-983 form a disordered region; that stretch reads LKRKKENSGTGSTVRKHKPPRLSE. Residues S1006, S1066, S1088, S1101, S1102, S1105, S1240, and S1269 each carry the phosphoserine modification. Disordered stretches follow at residues 1359–1387 and 1415–1518; these read VTEGNCSPVSSPSKMAPVKKPSGFDPTRE and ETDQ…DTSS. Residues 1362-1371 are compositionally biased toward polar residues; it reads GNCSPVSSPS. The segment covering 1469–1490 has biased composition (basic and acidic residues); the sequence is LETREELEVDVLKEDITLDESR. The segment covering 1492-1504 has biased composition (low complexity); the sequence is PPSSSEESTGSWS.

It belongs to the AKAP110 family. In terms of assembly, interacts (via the PKA-RII subunit binding domain) with the RI subunit of PKA. Interacts with SPHK1; the interaction greatly reduces SPHK1 activity. As to expression, abundant in heart ventricle (at protein level).

The protein resides in the cytoplasm. Anchoring protein that binds preferentially to the type I regulatory subunit of c-AMP-dependent protein kinase (PKA type I) and targets it to distinct subcellular compartments. May act as a converging factor linking cAMP and sphingosine signaling pathways. Plays a regulatory role in the modulation of SPHK1. This chain is A-kinase anchor protein SPHKAP (Sphkap), found in Rattus norvegicus (Rat).